The following is a 345-amino-acid chain: Fe(3+) ions import ATP-binding protein FbpC (345 aa).

In terms of domain architecture, ABC transporter spans 3 to 233 (LSLKAATVRF…PADEFVARFL (231 aa)). 35–42 (GPSGSGKS) is an ATP binding site.

Belongs to the ABC transporter superfamily. Fe(3+) ion importer (TC 3.A.1.10) family. The complex is composed of two ATP-binding proteins (FbpC), two transmembrane proteins (FbpB) and a solute-binding protein (FbpA).

It localises to the cell membrane. It catalyses the reaction Fe(3+)(out) + ATP + H2O = Fe(3+)(in) + ADP + phosphate + H(+). Part of the ABC transporter complex FbpABC involved in Fe(3+) ions import. Responsible for energy coupling to the transport system. The sequence is that of Fe(3+) ions import ATP-binding protein FbpC from Streptomyces avermitilis (strain ATCC 31267 / DSM 46492 / JCM 5070 / NBRC 14893 / NCIMB 12804 / NRRL 8165 / MA-4680).